The sequence spans 150 residues: Large ribosomal subunit protein bL9 (150 aa).

Belongs to the bacterial ribosomal protein bL9 family.

Its function is as follows. Binds to the 23S rRNA. This is Large ribosomal subunit protein bL9 from Polynucleobacter asymbioticus (strain DSM 18221 / CIP 109841 / QLW-P1DMWA-1) (Polynucleobacter necessarius subsp. asymbioticus).